A 944-amino-acid polypeptide reads, in one-letter code: Isoleucine--tRNA ligase (944 aa).

Residues 58–68 (PYANGSIHIGH) carry the 'HIGH' region motif. Glutamate 563 is a binding site for L-isoleucyl-5'-AMP. Positions 604–608 (KMSKS) match the 'KMSKS' region motif. Lysine 607 contacts ATP. The Zn(2+) site is built by cysteine 907, cysteine 910, cysteine 927, and cysteine 930.

The protein belongs to the class-I aminoacyl-tRNA synthetase family. IleS type 1 subfamily. Monomer. Requires Zn(2+) as cofactor.

It localises to the cytoplasm. It catalyses the reaction tRNA(Ile) + L-isoleucine + ATP = L-isoleucyl-tRNA(Ile) + AMP + diphosphate. In terms of biological role, catalyzes the attachment of isoleucine to tRNA(Ile). As IleRS can inadvertently accommodate and process structurally similar amino acids such as valine, to avoid such errors it has two additional distinct tRNA(Ile)-dependent editing activities. One activity is designated as 'pretransfer' editing and involves the hydrolysis of activated Val-AMP. The other activity is designated 'posttransfer' editing and involves deacylation of mischarged Val-tRNA(Ile). This chain is Isoleucine--tRNA ligase, found in Salmonella paratyphi A (strain ATCC 9150 / SARB42).